Consider the following 970-residue polypeptide: Protein translocase subunit SecA (970 aa).

ATP contacts are provided by residues Q99, 117-121 (GEGKT), and D631.

The protein belongs to the SecA family. Monomer and homodimer. Part of the essential Sec protein translocation apparatus which comprises SecA, SecYEG and auxiliary proteins SecDF. Other proteins may also be involved.

The protein resides in the cell inner membrane. It is found in the cytoplasm. The enzyme catalyses ATP + H2O + cellular proteinSide 1 = ADP + phosphate + cellular proteinSide 2.. Its function is as follows. Part of the Sec protein translocase complex. Interacts with the SecYEG preprotein conducting channel. Has a central role in coupling the hydrolysis of ATP to the transfer of proteins into and across the cell membrane, serving as an ATP-driven molecular motor driving the stepwise translocation of polypeptide chains across the membrane. The polypeptide is Protein translocase subunit SecA (Chlamydia pneumoniae (Chlamydophila pneumoniae)).